The sequence spans 212 residues: Protein irg-1 (212 aa).

In terms of tissue distribution, expressed in the intestine.

Plays a role in innate immunity by conferring resistance to virulent strains of the Gram-negative bacterium P.aeruginosa via the zip-2 pathway. Can act independently of several immunity-related pathways including pmk-1 p38MAPK, dbl-1 TGF-beta, kgb-1 JNK and bar-1/beta-catenin pathways. This Caenorhabditis elegans protein is Protein irg-1.